Reading from the N-terminus, the 574-residue chain is Acetolactate synthase large subunit (574 aa).

Glutamate 51 contacts thiamine diphosphate. FAD-binding positions include arginine 153, 261–282 (HGTY…IGVR), and 304–323 (DIDP…IVGN). Residues 397 to 477 (QHQMFAALYY…ILILNLNNKS (81 aa)) are thiamine pyrophosphate binding. Mg(2+) contacts are provided by aspartate 448 and asparagine 475.

The protein belongs to the TPP enzyme family. Dimer of large and small chains. It depends on Mg(2+) as a cofactor. The cofactor is thiamine diphosphate.

It carries out the reaction 2 pyruvate + H(+) = (2S)-2-acetolactate + CO2. It participates in amino-acid biosynthesis; L-isoleucine biosynthesis; L-isoleucine from 2-oxobutanoate: step 1/4. The protein operates within amino-acid biosynthesis; L-valine biosynthesis; L-valine from pyruvate: step 1/4. The chain is Acetolactate synthase large subunit (ilvI) from Buchnera aphidicola subsp. Schlechtendalia chinensis.